A 254-amino-acid chain; its full sequence is Alcohol dehydrogenase 2 (254 aa).

10–33 (FVAGLGGIGFDTSREIVKSGPKNL) provides a ligand contact to NAD(+). Ser138 contacts substrate. Tyr151 serves as the catalytic Proton acceptor.

It belongs to the short-chain dehydrogenases/reductases (SDR) family. In terms of assembly, homodimer.

It catalyses the reaction a primary alcohol + NAD(+) = an aldehyde + NADH + H(+). It carries out the reaction a secondary alcohol + NAD(+) = a ketone + NADH + H(+). This Drosophila mulleri (Fruit fly) protein is Alcohol dehydrogenase 2 (Adh2).